Reading from the N-terminus, the 276-residue chain is Formamidopyrimidine-DNA glycosylase (276 aa).

Proline 2 functions as the Schiff-base intermediate with DNA in the catalytic mechanism. Catalysis depends on glutamate 3, which acts as the Proton donor. Lysine 58 acts as the Proton donor; for beta-elimination activity in catalysis. DNA is bound by residues histidine 94, arginine 112, and arginine 157. Residues 242–276 (FVYDRAGLPCRVCGTPIKQIVQGQRSTYFCPTCQR) form an FPG-type zinc finger. Arginine 266 (proton donor; for delta-elimination activity) is an active-site residue.

The protein belongs to the FPG family. In terms of assembly, monomer. The cofactor is Zn(2+).

It carries out the reaction Hydrolysis of DNA containing ring-opened 7-methylguanine residues, releasing 2,6-diamino-4-hydroxy-5-(N-methyl)formamidopyrimidine.. The enzyme catalyses 2'-deoxyribonucleotide-(2'-deoxyribose 5'-phosphate)-2'-deoxyribonucleotide-DNA = a 3'-end 2'-deoxyribonucleotide-(2,3-dehydro-2,3-deoxyribose 5'-phosphate)-DNA + a 5'-end 5'-phospho-2'-deoxyribonucleoside-DNA + H(+). In terms of biological role, involved in base excision repair of DNA damaged by oxidation or by mutagenic agents. Acts as a DNA glycosylase that recognizes and removes damaged bases. Has a preference for oxidized purines, such as 7,8-dihydro-8-oxoguanine (8-oxoG). Has AP (apurinic/apyrimidinic) lyase activity and introduces nicks in the DNA strand. Cleaves the DNA backbone by beta-delta elimination to generate a single-strand break at the site of the removed base with both 3'- and 5'-phosphates. This is Formamidopyrimidine-DNA glycosylase from Paraburkholderia phytofirmans (strain DSM 17436 / LMG 22146 / PsJN) (Burkholderia phytofirmans).